The sequence spans 556 residues: Protein trichome birefringence-like 1 (556 aa).

A helical; Signal-anchor for type II membrane protein transmembrane segment spans residues 38-58 (TFVYAFVVTFVALTVFLAFSP). The GDS motif motif lies at 269–271 (GDS). Residues 514-528 (DCSHWCLPGVPDSWN) carry the DCXHWCLPGXXDXWN motif motif.

Belongs to the PC-esterase family. TBL subfamily. Not expressed in trichomes.

It localises to the membrane. Can complement TBR and is therefore functionally equivalent, but may work in different tissue. May act as a bridging protein that binds pectin and other cell wall polysaccharides. Probably involved in maintaining esterification of pectins. May be involved in the specific O-acetylation of cell wall polymers. This chain is Protein trichome birefringence-like 1 (TBL1), found in Arabidopsis thaliana (Mouse-ear cress).